Reading from the N-terminus, the 154-residue chain is MTPLLQAEAKMNTSLYLTESIQQHEFNLTSPQSFYSSPSVPNSKNNSGIFSYNTANNSRVSSSDEFTTQQDGMNTIMYKNNISKTFEDDIFYCPRSLLTPEEQVVYQEIDKYYMEQALLTQLQISQTYSSTPKEEKIVKFNPYTSKSFSPASSE.

Ser47 bears the Phosphoserine mark.

It to yeast YPL229w.

This is an uncharacterized protein from Saccharomyces cerevisiae (strain ATCC 204508 / S288c) (Baker's yeast).